The sequence spans 200 residues: Adenylate kinase (200 aa).

Position 10 to 15 (10 to 15) interacts with ATP; that stretch reads GAGKGT. The NMP stretch occupies residues 30-59; it reads STGDLFRANISQQTELGKLAKSYMDAGNLV. AMP-binding positions include T31, R36, 57-59, 84-87, and Q91; these read NLV and GFPR. The interval 125–163 is LID; the sequence is GRRVCRNDSAHVFHVTYTPPKKEGVCDVCGGELYQRDDD. ATP is bound by residues R126 and 136–137; that span reads VF. AMP is bound by residues R160 and R171.

This sequence belongs to the adenylate kinase family. In terms of assembly, monomer.

It is found in the cytoplasm. It catalyses the reaction AMP + ATP = 2 ADP. The protein operates within purine metabolism; AMP biosynthesis via salvage pathway; AMP from ADP: step 1/1. Catalyzes the reversible transfer of the terminal phosphate group between ATP and AMP. Plays an important role in cellular energy homeostasis and in adenine nucleotide metabolism. The sequence is that of Adenylate kinase from Streptomyces lividans.